The chain runs to 249 residues: Urease accessory protein UreG (249 aa).

Residues 1–13 (MHLGHEEFQRTDG) show a composition bias toward basic and acidic residues. The segment at 1–34 (MHLGHEEFQRTDGRASTGPADAGPAGAGRAPRIG) is disordered. Low complexity predominate over residues 18 to 33 (GPADAGPAGAGRAPRI). 37-44 (GPVGSGKT) is a GTP binding site. A disordered region spans residues 229-249 (PRGGSYDASDASNASQPLNRM). Positions 238–249 (DASNASQPLNRM) are enriched in polar residues.

The protein belongs to the SIMIBI class G3E GTPase family. UreG subfamily. As to quaternary structure, homodimer. UreD, UreF and UreG form a complex that acts as a GTP-hydrolysis-dependent molecular chaperone, activating the urease apoprotein by helping to assemble the nickel containing metallocenter of UreC. The UreE protein probably delivers the nickel.

Its subcellular location is the cytoplasm. Its function is as follows. Facilitates the functional incorporation of the urease nickel metallocenter. This process requires GTP hydrolysis, probably effectuated by UreG. This chain is Urease accessory protein UreG, found in Frankia casuarinae (strain DSM 45818 / CECT 9043 / HFP020203 / CcI3).